A 79-amino-acid polypeptide reads, in one-letter code: uncharacterized protein (79 aa).

The chain crosses the membrane as a helical span at residues leucine 53 to valine 73.

The protein localises to the membrane. This is an uncharacterized protein from Escherichia coli O157:H7.